Here is a 518-residue protein sequence, read N- to C-terminus: Zinc finger protein 776 (518 aa).

The region spanning valine 14–valine 89 is the KRAB domain. Residues lysine 171, lysine 196, lysine 220, and lysine 247 each participate in a glycyl lysine isopeptide (Lys-Gly) (interchain with G-Cter in SUMO2) cross-link. The C2H2-type 1; degenerate zinc-finger motif lies at tyrosine 208–leucine 230. Residues tyrosine 236–arginine 258 form a C2H2-type 2; degenerate zinc finger. 7 C2H2-type zinc fingers span residues tyrosine 264–histidine 286, tyrosine 292–histidine 314, tyrosine 320–histidine 342, tyrosine 348–histidine 370, phenylalanine 376–histidine 398, tyrosine 404–histidine 426, and tyrosine 432–histidine 454. The C2H2-type 10; degenerate zinc finger occupies histidine 460–histidine 482. The C2H2-type 11 zinc finger occupies histidine 488–histidine 510.

The protein belongs to the krueppel C2H2-type zinc-finger protein family.

The protein localises to the nucleus. Functionally, may be involved in transcriptional regulation. The polypeptide is Zinc finger protein 776 (ZNF776) (Homo sapiens (Human)).